A 291-amino-acid polypeptide reads, in one-letter code: MSEIRLFVTTTEKQAAAILDVMSVNFEEEGYAVATMEIDEKRDVWEASVYMMADEEESVKSRLADALAADFSHLPIEREVLPEIDWIAKSLEGLAPVRAGRFVVHGSHDRDKVKTGEIAIEIDAGQAFGTGHHGTTAGCLEMLACVARSRRVRNVLDLGTGSGVLAIAAWKLLHVPGLATDIDPVATRVASDNARRNGVVDGLTFATAPGFHSTAFGTHGPFDLVIANILARPLMKMAPELVAHIAPGGSVILSGILAEQRWKVLAAYNGQRLKHVQTIWKNGWVTIHLTK.

Residues Thr136, Gly159, Asp181, and Asn228 each contribute to the S-adenosyl-L-methionine site.

Belongs to the methyltransferase superfamily. PrmA family.

The protein localises to the cytoplasm. It catalyses the reaction L-lysyl-[protein] + 3 S-adenosyl-L-methionine = N(6),N(6),N(6)-trimethyl-L-lysyl-[protein] + 3 S-adenosyl-L-homocysteine + 3 H(+). Methylates ribosomal protein L11. This chain is Ribosomal protein L11 methyltransferase, found in Sinorhizobium fredii (strain NBRC 101917 / NGR234).